We begin with the raw amino-acid sequence, 999 residues long: MEEAHLLSAADVLRRFSVTAEGGLTLEQVTDARERYGPNELPTEEGKSLWELVVEQFEDLLVRILLLAALVSFVLAWFEEGEETTTAFVEPLVIMLILVANAIVGVWQERNAESAIEALKEYEPEMGKVIRSDRKGVQRIRARDIVPGDIVEVAVGDKVPADLRLIEIKSTTLRVDQSILTGESVSVTKHTDAIPDPRAVNQDKKNMLFSGTNIASGKALGVAVATGLHTELGKIRSQMAAVEPERTPLQRKLDEFGRQLSHAISVICVAVWVINIGHFADPAHGGSWLRGAVYYFKIAVALAVAAIPEGLPAVITTCLALGTRRMARKNAIVRSLPSVETLGCTSVICSDKTGTLTTNQMSVCRMFVVAEAEAGACRLHEFTISGTTYTPEGEVRQGEQLVRCGQFDGLVELATICALCNDSALDYNEAKGVYEKVGEATETALTCLVEKMNVFDTDLKGLSRVERAGACNSVIKQLMQKEFTLEFSRDRKSMSVYCTPTRADPKAQGSKMFVKGAPESVIERCSSVRVGSRTVPLSATSREHILAKIRDWGSGSHTLRCLALATRDTPPRKEDMQLDDCSQFVQYETGLTFVGCVGMLDPPRPEVAACITRCSRAGIRVVMITGDNKGTAVAICRRLGIFGDTEDVLGKAYTGREFDDLSPEQQRQACRTARCFARVEPAHKSRIVENLQSFNEITAMTGDGVNDAPALKKAEIGIAMGSGTAVAKSAAEMVLSDDNFASIVAAVEEGRAIYNNMKQFIRYLISSNVGEVVCIFLTAILGLPEALIPVQLLWVNLVTDGLPATALGFNPPDLDIMEKLPRNPREALISGWLFFRYLAIGVYVGLATVAAATWWFLYDAEGPQVTFHQLRNFLKCSEDNPLFAGIDCEVFESRFPTTMALSVLVTIEMCNALNSVSENQSLLRMPPWLNPWLLGAVVMSMALHFLILLVPPLPLIFQVTPLSGRQWGVVLQMSLPVILLDEALKYLSRHHVDEKKDLK.

Residue methionine 1 is modified to N-acetylmethionine. The Cytoplasmic portion of the chain corresponds to 1–48; it reads MEEAHLLSAADVLRRFSVTAEGGLTLEQVTDARERYGPNELPTEEGKS. Serine 17 bears the Phosphoserine mark. Threonine 19 carries the phosphothreonine modification. The helical transmembrane segment at 49–69 threads the bilayer; it reads LWELVVEQFEDLLVRILLLAA. At 70–89 the chain is on the lumenal side; sequence LVSFVLAWFEEGEETTTAFV. Residues 90–110 form a helical membrane-spanning segment; that stretch reads EPLVIMLILVANAIVGVWQER. At 111–253 the chain is on the cytoplasmic side; the sequence is NAESAIEALK…PERTPLQRKL (143 aa). The chain crosses the membrane as a helical span at residues 254-273; it reads DEFGRQLSHAISVICVAVWV. The Lumenal segment spans residues 274–295; that stretch reads INIGHFADPAHGGSWLRGAVYY. Residues 296-313 traverse the membrane as a helical segment; that stretch reads FKIAVALAVAAIPEGLPA. Ca(2+) is bound by residues valine 304, alanine 305, isoleucine 307, and glutamate 309. Over 314–757 the chain is Cytoplasmic; that stretch reads VITTCLALGT…EEGRAIYNNM (444 aa). The active-site 4-aspartylphosphate intermediate is the aspartate 351. Positions 351 and 353 each coordinate Mg(2+). Threonine 353 contacts ATP. An interaction with phospholamban 1 region spans residues 370–400; it reads AEAEAGACRLHEFTISGTTYTPEGEVRQGEQ. Threonine 415 carries the phosphothreonine modification. Residues glutamate 442, arginine 489, lysine 515, arginine 560, threonine 625, glycine 626, and aspartate 627 each coordinate ATP. Serine 662 carries the post-translational modification Phosphoserine. Arginine 678 and lysine 684 together coordinate ATP. Aspartate 703 is a Mg(2+) binding site. Asparagine 706 is an ATP binding site. The helical transmembrane segment at 758 to 777 threads the bilayer; sequence KQFIRYLISSNVGEVVCIFL. The Ca(2+) site is built by asparagine 768 and glutamate 771. Over 778 to 787 the chain is Lumenal; sequence TAILGLPEAL. The helical transmembrane segment at 788–808 threads the bilayer; it reads IPVQLLWVNLVTDGLPATALG. The segment at 788–808 is interaction with phospholamban 2; that stretch reads IPVQLLWVNLVTDGLPATALG. 3 residues coordinate Ca(2+): asparagine 796, threonine 799, and aspartate 800. The Cytoplasmic portion of the chain corresponds to 809–828; sequence FNPPDLDIMEKLPRNPREAL. Residues 829 to 851 traverse the membrane as a helical segment; that stretch reads ISGWLFFRYLAIGVYVGLATVAA. Residues 852–897 are Lumenal-facing; it reads ATWWFLYDAEGPQVTFHQLRNFLKCSEDNPLFAGIDCEVFESRFPT. A helical membrane pass occupies residues 898 to 917; the sequence is TMALSVLVTIEMCNALNSVS. Residue glutamate 908 coordinates Ca(2+). Residues 918–930 are Cytoplasmic-facing; that stretch reads ENQSLLRMPPWLN. Residues 931–949 form a helical membrane-spanning segment; that stretch reads PWLLGAVVMSMALHFLILL. The Lumenal segment spans residues 950–964; it reads VPPLPLIFQVTPLSG. The helical transmembrane segment at 965-985 threads the bilayer; that stretch reads RQWGVVLQMSLPVILLDEALK. The Cytoplasmic segment spans residues 986-999; sequence YLSRHHVDEKKDLK.

It belongs to the cation transport ATPase (P-type) (TC 3.A.3) family. Type IIA subfamily. Interacts with sarcolipin (SLN). Interacts with phospholamban (PLN). Interacts with myoregulin (MRLN). Interacts with DWORF. Interacts with VMP1. Interacts with TUNAR; the interaction occurs at low levels in low glucose conditions and is increased by high glucose levels. The cofactor is Mg(2+). Found in most tissues. Most abundant in large and small intestine, spleen and lung. Also detected in PC12 cells.

It localises to the endoplasmic reticulum membrane. It is found in the sarcoplasmic reticulum membrane. The enzyme catalyses Ca(2+)(in) + ATP + H2O = Ca(2+)(out) + ADP + phosphate + H(+). Its activity is regulated as follows. Inhibited by sarcolipin (SLN), phospholamban (PLN) and myoregulin (MRLN). Enhanced by DWORF; DWORF increases activity by displacing sarcolipin (SLN), phospholamban (PLN) and myoregulin (MRLN). This magnesium-dependent enzyme catalyzes the hydrolysis of ATP coupled with the transport of the calcium. Transports calcium ions from the cytosol into the sarcoplasmic/endoplasmic reticulum lumen. Contributes to calcium sequestration involved in muscular excitation/contraction. In terms of biological role, this magnesium-dependent enzyme catalyzes the hydrolysis of ATP coupled with the transport of calcium. Transports calcium ions from the cytosol into the sarcoplasmic/endoplasmic reticulum lumen. Contributes to calcium sequestration involved in muscular excitation/contraction. The chain is Sarcoplasmic/endoplasmic reticulum calcium ATPase 3 (Atp2a3) from Rattus norvegicus (Rat).